The following is a 503-amino-acid chain: Cysteine desulfurase, mitochondrial (503 aa).

Residues 1 to 27 (MSNIAPQVLRHASRACSRRLSLSASLV) constitute a mitochondrion transit peptide. A compositionally biased stretch (low complexity) spans 34–50 (RTVTGSGSGGRRYVSGS). Positions 34–58 (RTVTGSGSGGRRYVSGSQRHNAQAQ) are disordered. Pyridoxal 5'-phosphate is bound by residues 172–173 (AT), N254, Q282, and 302–304 (SGH). K305 carries the post-translational modification N6-(pyridoxal phosphate)lysine. Pyridoxal 5'-phosphate is bound at residue T342. C427 (cysteine persulfide intermediate) is an active-site residue. Residue C427 coordinates [2Fe-2S] cluster.

This sequence belongs to the class-V pyridoxal-phosphate-dependent aminotransferase family. NifS/IscS subfamily. Pyridoxal 5'-phosphate serves as cofactor.

It is found in the mitochondrion. It catalyses the reaction (sulfur carrier)-H + L-cysteine = (sulfur carrier)-SH + L-alanine. Its function is as follows. Catalyzes the removal of elemental sulfur from cysteine to produce alanine. It supplies the inorganic sulfur for iron-sulfur (Fe-S) clusters. Plays a role in both tRNA-processing and mitochondrial metabolism. Involved in the 2-thio-modification of both 5-carboxymethylaminomethyl-2-thiouridine in mitochondrial tRNAs and 5-methoxycarbonylmethyl-2-thiouridine (mcm5s2U) in cytoplasmic tRNAs. In Arthroderma benhamiae (strain ATCC MYA-4681 / CBS 112371) (Trichophyton mentagrophytes), this protein is Cysteine desulfurase, mitochondrial.